Here is a 144-residue protein sequence, read N- to C-terminus: MAGVSVRDVAAQDFINAYASFLQRQGKLEVPGYVDIVKTSSGNEMPPQDAEGWFYKRAASVARHIYMRKQVGVGKLNKLYGGAKSRGVRPYKHIDASGSINRKVLQALEKIGIVEISPKGGRRISENGQRDLDRIAAQTLEEDE.

The protein belongs to the eukaryotic ribosomal protein eS19 family. As to quaternary structure, component of the small ribosomal subunit (SSU). Mature yeast ribosomes consist of a small (40S) and a large (60S) subunit. The 40S small subunit contains 1 molecule of ribosomal RNA (18S rRNA) and 33 different proteins (encoded by 57 genes). The large 60S subunit contains 3 rRNA molecules (25S, 5.8S and 5S rRNA) and 46 different proteins (encoded by 81 genes).

The protein resides in the cytoplasm. In terms of biological role, component of the ribosome, a large ribonucleoprotein complex responsible for the synthesis of proteins in the cell. The small ribosomal subunit (SSU) binds messenger RNAs (mRNAs) and translates the encoded message by selecting cognate aminoacyl-transfer RNA (tRNA) molecules. The large subunit (LSU) contains the ribosomal catalytic site termed the peptidyl transferase center (PTC), which catalyzes the formation of peptide bonds, thereby polymerizing the amino acids delivered by tRNAs into a polypeptide chain. The nascent polypeptides leave the ribosome through a tunnel in the LSU and interact with protein factors that function in enzymatic processing, targeting, and the membrane insertion of nascent chains at the exit of the ribosomal tunnel. eS19 is required for proper maturation of the small (40S) ribosomal subunit. Binds to 40S pre-ribosomal particles, probably required after association of NOC4 but before association of ENP1, TSR1 and RIO2 with 20/21S pre-rRNA. Required for proper maturation of the small (40S) ribosomal subunit. Binds to 40s pre-ribosomal particles, probably required after association of NOC4 but before association of ENP1, TSR1 and RIO2 with 20/21S pre-rRNA. The sequence is that of Small ribosomal subunit protein eS19B from Saccharomyces cerevisiae (strain ATCC 204508 / S288c) (Baker's yeast).